We begin with the raw amino-acid sequence, 284 residues long: Asialoglycoprotein receptor 1 (284 aa).

Positions 1 to 18 (MTKDYQDFQHLDNDNDHH) are enriched in basic and acidic residues. Residues 1-25 (MTKDYQDFQHLDNDNDHHQLRRGPP) form a disordered region. Topologically, residues 1–39 (MTKDYQDFQHLDNDNDHHQLRRGPPPTPRLLQRLCSGSR) are cytoplasmic. Positions 5–8 (YQDF) match the Endocytosis signal motif. Cys-35 carries S-palmitoyl cysteine lipidation. The chain crosses the membrane as a helical; Signal-anchor for type II membrane protein span at residues 40-60 (LLLLSSSLSILLLVVVCVITS). Residues 59–117 (TSQNSQLREDLLALRQNFSNLTVSTEDQVKALSTQGSSVGRKMKLVESKLEKQQKDLTE) are a coiled coil. Residues 61 to 284 (QNSQLREDLL…VCETKLDKAN (224 aa)) lie on the Extracellular side of the membrane. Asn-75, Asn-78, and Asn-146 each carry an N-linked (GlcNAc...) asparagine glycan. 3 cysteine pairs are disulfide-bonded: Cys-153–Cys-164, Cys-181–Cys-276, and Cys-254–Cys-268. The C-type lectin domain maps to 160–277 (YEGSCYWFSS…CRRPYRWVCE (118 aa)). The Ca(2+) site is built by Val-190, Glu-196, Asp-215, Gln-239, Asp-241, Glu-252, Asp-253, Asn-264, Asp-265, and Glu-277.

In terms of assembly, interacts with LASS2. In terms of processing, phosphorylated on a cytoplasmic Ser residue. Expressed exclusively in hepatic parenchymal cells.

The protein localises to the membrane. Its function is as follows. Mediates the endocytosis of plasma glycoproteins to which the terminal sialic acid residue on their complex carbohydrate moieties has been removed. The receptor recognizes terminal galactose and N-acetylgalactosamine units. After ligand binding to the receptor, the resulting complex is internalized and transported to a sorting organelle, where receptor and ligand are disassociated. The receptor then returns to the cell membrane surface. The protein is Asialoglycoprotein receptor 1 (Asgr1) of Mus musculus (Mouse).